The following is a 138-amino-acid chain: Large ribosomal subunit protein uL16 (138 aa).

It belongs to the universal ribosomal protein uL16 family. Part of the 50S ribosomal subunit.

Functionally, binds 23S rRNA and is also seen to make contacts with the A and possibly P site tRNAs. The chain is Large ribosomal subunit protein uL16 from Mycoplasma genitalium (strain ATCC 33530 / DSM 19775 / NCTC 10195 / G37) (Mycoplasmoides genitalium).